The primary structure comprises 242 residues: DnaJ homolog subfamily B member 6 (242 aa).

A J domain is found at 3–69 (EYYDVLGVQR…KKRDIYDKYG (67 aa)).

Homooligomer.

The protein localises to the cytoplasm. It is found in the perinuclear region. The protein resides in the nucleus. Its function is as follows. Has a stimulatory effect on the ATPase activity of HSP70 in a dose-dependent and time-dependent manner and hence acts as a co-chaperone of HSP70. Plays an indispensable role in the organization of KRT8/KRT18 filaments. Acts as an endogenous molecular chaperone for neuronal proteins including huntingtin. Suppresses aggregation and toxicity of polyglutamine-containing, aggregation-prone proteins. Also reduces cellular toxicity and caspase-3 activity. This Xenopus tropicalis (Western clawed frog) protein is DnaJ homolog subfamily B member 6.